The primary structure comprises 106 residues: Large ribosomal subunit protein P1 (106 aa).

Positions 66–76 are enriched in low complexity; sequence AQPQATQAQPA. The tract at residues 66–106 is disordered; it reads AQPQATQAQPAAEEKKEEKKEEEKKGPSEEEIASGLASLFG. Basic and acidic residues predominate over residues 77–93; the sequence is AEEKKEEKKEEEKKGPS.

Belongs to the eukaryotic ribosomal protein P1/P2 family. Part of the 50S ribosomal subunit. Homodimer, it forms part of the ribosomal stalk which helps the ribosome interact with GTP-bound translation factors. Forms a heptameric uL10/P0(P1)2(P1)2(P1)2 complex, where uL10/P0 forms an elongated spine to which the P1 dimers bind in a sequential fashion.

Forms part of the ribosomal stalk, playing a central role in the interaction of the ribosome with GTP-bound translation factors. The sequence is that of Large ribosomal subunit protein P1 from Saccharolobus solfataricus (strain ATCC 35092 / DSM 1617 / JCM 11322 / P2) (Sulfolobus solfataricus).